The sequence spans 296 residues: GTPase Era (296 aa).

One can recognise an Era-type G domain in the interval 7–173; that stretch reads KAGFVSIIGR…VDLVREHLPE (167 aa). The G1 stretch occupies residues 15 to 22; it reads GRPNVGKS. 15 to 22 is a GTP binding site; it reads GRPNVGKS. Residues 41-45 form a G2 region; sequence QTTRN. The tract at residues 62–65 is G3; it reads DTPG. GTP is bound by residues 62 to 66 and 122 to 125; these read DTPGI and NKID. Residues 122 to 125 are G4; that stretch reads NKID. Residues 152-154 are G5; sequence ISA. Residues 204–281 enclose the KH type-2 domain; the sequence is TNREVPYGTA…YLELFVQVQE (78 aa).

This sequence belongs to the TRAFAC class TrmE-Era-EngA-EngB-Septin-like GTPase superfamily. Era GTPase family. In terms of assembly, monomer.

Its subcellular location is the cytoplasm. It localises to the cell inner membrane. In terms of biological role, an essential GTPase that binds both GDP and GTP, with rapid nucleotide exchange. Plays a role in 16S rRNA processing and 30S ribosomal subunit biogenesis and possibly also in cell cycle regulation and energy metabolism. This chain is GTPase Era, found in Trichlorobacter lovleyi (strain ATCC BAA-1151 / DSM 17278 / SZ) (Geobacter lovleyi).